The sequence spans 607 residues: MSQVFDASAFLATCSGRPGVYRMFDGEARLLYVGKAKNLKKRLASYFRKTGLAPKTAALVARIAQVETTITANETEALLLEQNLIKEWRPPYNILLRDDKSYPYVFLSDGEFPRLGIHRGAKKAKGRYFGPYPSAGAIRESLSLLQKAFSVRQCEDSYYANRTRPCLQYQIKRCKGPCTDLVTAEEYAEDVRHSVMFLEGRSQQLGNELNAEMEKAAMALDFEKAAELRDQIALLRRVQDQQYIEGGSGDVDVIAAFVNPGGACVHLISVRGGRVLGSKNFFPQVGIEEEVAEVMAAFLSQYYLGNAERELPGELIVNVVHEDFNAITEALHTLRGRELTISHRVRGTRARWQQLAVTNAEQALNARLANRQHMAARFEALAEVLGLDEVPQRLECYDISHSSGEATVASCVVFGPEGPIKSDYRRFNIEDVTAGDDYAAMHQALTRRYGRIKDGEGKLPDVLLVDGGKGQLNMARDVMQELGFTDLTLLGVAKGVTRKAGFETLYLNDVHHEFTLKGDSSALHLIQQIRDEAHRFAITGHRARRGKARRVSSLEDVAGVGPKRRRDLLKHFGGLQELNRASIDEIAKAPGISKKLAESIYASLHSE.

The 79-residue stretch at 16 to 94 folds into the GIY-YIG domain; it reads GRPGVYRMFD…IKEWRPPYNI (79 aa). Residues 203 to 238 enclose the UVR domain; it reads QQLGNELNAEMEKAAMALDFEKAAELRDQIALLRRV.

Belongs to the UvrC family. In terms of assembly, interacts with UvrB in an incision complex.

The protein resides in the cytoplasm. In terms of biological role, the UvrABC repair system catalyzes the recognition and processing of DNA lesions. UvrC both incises the 5' and 3' sides of the lesion. The N-terminal half is responsible for the 3' incision and the C-terminal half is responsible for the 5' incision. The protein is UvrABC system protein C of Pseudomonas putida (strain ATCC 47054 / DSM 6125 / CFBP 8728 / NCIMB 11950 / KT2440).